Reading from the N-terminus, the 349-residue chain is UDP-N-acetylenolpyruvoylglucosamine reductase (349 aa).

The FAD-binding PCMH-type domain occupies 25-197 (GIAATARYAA…VAVTFRLPKR (173 aa)). Arg173 is an active-site residue. Catalysis depends on Ser249, which acts as the Proton donor. Residue Glu345 is part of the active site.

This sequence belongs to the MurB family. FAD serves as cofactor.

It localises to the cytoplasm. The enzyme catalyses UDP-N-acetyl-alpha-D-muramate + NADP(+) = UDP-N-acetyl-3-O-(1-carboxyvinyl)-alpha-D-glucosamine + NADPH + H(+). The protein operates within cell wall biogenesis; peptidoglycan biosynthesis. Its function is as follows. Cell wall formation. The chain is UDP-N-acetylenolpyruvoylglucosamine reductase from Burkholderia vietnamiensis (strain G4 / LMG 22486) (Burkholderia cepacia (strain R1808)).